A 294-amino-acid polypeptide reads, in one-letter code: Ribosomal protein L11 methyltransferase (294 aa).

The S-adenosyl-L-methionine site is built by Thr-144, Gly-165, Asp-187, and Asn-229.

Belongs to the methyltransferase superfamily. PrmA family.

The protein localises to the cytoplasm. The enzyme catalyses L-lysyl-[protein] + 3 S-adenosyl-L-methionine = N(6),N(6),N(6)-trimethyl-L-lysyl-[protein] + 3 S-adenosyl-L-homocysteine + 3 H(+). Methylates ribosomal protein L11. The sequence is that of Ribosomal protein L11 methyltransferase from Pseudomonas paraeruginosa (strain DSM 24068 / PA7) (Pseudomonas aeruginosa (strain PA7)).